Here is a 99-residue protein sequence, read N- to C-terminus: (4S)-4-hydroxy-5-phosphonooxypentane-2,3-dione isomerase (99 aa).

One can recognise an ABM domain in the interval 2 to 91 (HVTLVEINVK…ISEPRKKRSF (90 aa)).

It belongs to the LsrG family. Homodimer.

The protein resides in the cytoplasm. The catalysed reaction is (2S)-2-hydroxy-3,4-dioxopentyl phosphate = 3-hydroxy-2,4-dioxopentyl phosphate. Its function is as follows. Involved in the degradation of phospho-AI-2, thereby terminating induction of the lsr operon and closing the AI-2 signaling cycle. Catalyzes the conversion of (4S)-4-hydroxy-5-phosphonooxypentane-2,3-dione (P-DPD) to 3-hydroxy-5-phosphonooxypentane-2,4-dione (P-HPD). The protein is (4S)-4-hydroxy-5-phosphonooxypentane-2,3-dione isomerase of Photorhabdus laumondii subsp. laumondii (strain DSM 15139 / CIP 105565 / TT01) (Photorhabdus luminescens subsp. laumondii).